Here is a 499-residue protein sequence, read N- to C-terminus: Potassium voltage-gated channel subfamily A member 2 (499 aa).

Positions 1–27 (MTVATGDLTDGSVGFAGHPQDSYDPEP) are disordered. The segment at 1 to 125 (MTVATGDLTD…YELGEEAMEI (125 aa)) is tetramerization domain. The Cytoplasmic segment spans residues 1 to 160 (MTVATGDLTD…LLFEYPESSG (160 aa)). A helical transmembrane segment spans residues 161–182 (PARIIAIISVTVILISIVSFCL). The Extracellular segment spans residues 183–221 (ETLPVFRDENEDMHGSGGNYYSYPNSTVRFQKSNTFTDP). A glycan (N-linked (GlcNAc...) asparagine) is linked at Asn-207. Residues 222 to 243 (FFIVETLCIIWFSFEFLVRFLA) form a helical membrane-spanning segment. A lipid anchor (S-palmitoyl cysteine) is attached at Cys-244. At 244–254 (CPSKAVFFTNL) the chain is on the cytoplasmic side. A helical transmembrane segment spans residues 255–275 (MNIIDIVAIIPYFITLGTELA). Residues 276–289 (EKTEDGQQGQQAMS) are Extracellular-facing. Residues 290-310 (LAILRVIRLVRVFRIFKLSRH) form a helical; Voltage-sensor membrane-spanning segment. Residues 311-325 (SKGLQILGQTLNASM) lie on the Cytoplasmic side of the membrane. Positions 312–325 (KGLQILGQTLNASM) are S4-S5 linker. Residues 326 to 347 (RELGLLIFFLFIGVILFSSAVF) traverse the membrane as a helical segment. The Extracellular portion of the chain corresponds to 348–361 (FAEADERDSQFPSI). Residues 362 to 373 (PDAFWWAVVSMT) constitute an intramembrane region (helical). Positions 374-379 (TVGYGD) match the Selectivity filter motif. An intramembrane segment occupies 374–381 (TVGYGDMV). The Extracellular portion of the chain corresponds to 382 to 388 (PTTIGGK). The chain crosses the membrane as a helical span at residues 389–417 (IVGSLCAIAGVLTIALPVPVIVSNFNYFY). Residues 418-499 (HRETEGEEQA…VNITKMLTDV (82 aa)) lie on the Cytoplasmic side of the membrane. Positions 497-499 (TDV) match the PDZ-binding motif.

The protein belongs to the potassium channel family. A (Shaker) (TC 1.A.1.2) subfamily. Kv1.2/KCNA2 sub-subfamily. In terms of assembly, homotetramer and heterotetramer with other family members. Detected in tadpole brain and spinal cord.

Its subcellular location is the cell membrane. The enzyme catalyses K(+)(in) = K(+)(out). In terms of biological role, voltage-gated potassium channel that mediates transmembrane potassium transport in excitable membranes, primarily in the brain and central nervous system. Prevents aberrant action potential firing and regulates neuronal output. Forms tetrameric potassium-selective channels through which potassium ions pass in accordance with their electrochemical gradient. The channel alternates between opened and closed conformations in response to the voltage difference across the membrane. Can form functional homotetrameric channels and heterotetrameric channels with other family members; the channels characteristics depend critically on the types of channel-forming alpha subunits that are present. Channel properties are modulated by cytoplasmic beta subunits that regulate the subcellular location of the alpha subunits. In vivo, membranes probably contain a mixture of heteromeric potassium channel complexes, making it difficult to assign currents observed in intact tissues to any particular potassium channel family member. Homotetrameric KCNA2 forms a delayed-rectifier potassium channel that opens in response to membrane depolarization, followed by slow spontaneous channel closure. Regulates neuronal excitability and plays a role as pacemaker in the regulation of neuronal action potentials. KCNA2-containing channels play a presynaptic role and prevent hyperexcitability and aberrant action potential firing. Response to toxins that are selective for KCNA2-containing potassium channels suggests that in Purkinje cells, dendritic subthreshold KCNA2-containing potassium channels prevent random spontaneous calcium spikes, suppressing dendritic hyperexcitability without hindering the generation of somatic action potentials, and thereby play an important role in motor coordination. Plays a role in the induction of long-term potentiation of neuron excitability in the CA3 layer of the hippocampus. The sequence is that of Potassium voltage-gated channel subfamily A member 2 (kcna2) from Xenopus laevis (African clawed frog).